We begin with the raw amino-acid sequence, 1421 residues long: Envelopment polyprotein (1421 aa).

Positions 1–20 are cleaved as a signal peptide; sequence MEGSYWWLSLLALLAWGANG. At 21–479 the chain is on the lumenal side; the sequence is ESTSPAETSP…CRMSHRPRTC (459 aa). The span at 22–31 shows a compositional bias: low complexity; it reads STSPAETSPA. The segment at 22–42 is disordered; the sequence is STSPAETSPAPTTPNPPVVNP. N-linked (GlcNAc...) asparagine; by host glycosylation is found at Asn-97 and Asn-346. A helical transmembrane segment spans residues 480–500; it reads LALFIWLGAGYGITCIAGYMV. Topologically, residues 501-610 are cytoplasmic; sequence YYAILALSML…KLGTLLKRLS (110 aa). A helical transmembrane segment spans residues 611–631; the sequence is WVTVFLCLFLTAIAPVQGQVT. Residues 632-643 lie on the Lumenal side of the membrane; it reads TSPVLPSNQSTE. Asn-639 is a glycosylation site (N-linked (GlcNAc...) asparagine; by host). The helical transmembrane segment at 644–664 threads the bilayer; sequence CTLLPPPVFLIFSAVLMSKTL. The Cytoplasmic portion of the chain corresponds to 665 to 708; sequence KRMGPVNKVGAAGHSARRTNSPKNLYKSKQIANTKSGPREPRRR. The helical transmembrane segment at 709-729 threads the bilayer; that stretch reads VVVKALLILTASSALQSIHLA. Positions 722-776 are excised as a propeptide; sequence ALQSIHLAQAFDSGSLPEGAWEEEMQLVQGCNQECSLEEDECSCPDGQSMTRKLL. At 730–1330 the chain is on the lumenal side; sequence QAFDSGSLPE…GSFFRNYLGS (601 aa). Disulfide bonds link Cys-901–Cys-1096 and Cys-929–Cys-934. 2 N-linked (GlcNAc...) asparagine; by host glycosylation sites follow: Asn-1081 and Asn-1299. The chain crosses the membrane as a helical span at residues 1331 to 1351; sequence ITLGIVLTLLPVAVVLLFFCY. Topologically, residues 1352–1421 are cytoplasmic; the sequence is GDKLFKLCSC…GKGKNYKELV (70 aa).

The protein belongs to the nairovirus envelope glycoprotein family. As to quaternary structure, heterodimer with glycoprotein C; in prefusion state. Heterodimer with glycoprotein N; in prefusion state. Homotrimeric; in postfusion state. Post-translationally, specific enzymatic cleavage by host MBTPS1/S1P/SKI-1 endopeptidase yield glycoprotein N. Specific enzymatic cleavages by host furin-like protease and MBTPS1/S1P endopeptidase yield GP38. In terms of processing, glycosylated.

The protein resides in the host endoplasmic reticulum membrane. It is found in the virion membrane. It localises to the host Golgi apparatus membrane. In terms of biological role, glycoprotein N and glycoprotein C interact with each other and are present at the surface of the virion. Glycoprotein N probably locks the Gn-Gc complex in a prefusion state. Glycoprotein N and glycoprotein C are able to attach the virion to host cell receptors. This attachment induces virion internalization predominantly through clathrin-dependent endocytosis. Glycoprotein C and glycoprotein N interact with each other and are present at the surface of the virion. The spikes at the surface of the virion are formed by an N-terminal extension of glycoprotein C. Glycoprotein N and glycoprotein C are able to attach the virion to host cell receptors. This attachment induces virion internalization predominantly through clathrin-dependent endocytosis. Class II fusion protein that promotes fusion of viral membrane with host endosomal membrane after endocytosis of the virion. Exposure to potassium is necessary for the conformational change leading to fusion. This Ixodes protein is Envelopment polyprotein (GP).